The primary structure comprises 262 residues: Adenosylcobinamide-GDP ribazoletransferase (262 aa).

Helical transmembrane passes span 4–26 (AWNG…SIAW), 37–57 (CMPL…ALFS), 59–79 (FSFS…IWMA), 112–132 (VGAF…LFLY), 139–159 (IPPA…AWLL), 183–203 (AIWA…STAI), 205–225 (VQTG…AKPW), and 237–257 (VLGA…WLLH).

This sequence belongs to the CobS family. The cofactor is Mg(2+).

It localises to the cell membrane. The catalysed reaction is alpha-ribazole + adenosylcob(III)inamide-GDP = adenosylcob(III)alamin + GMP + H(+). The enzyme catalyses alpha-ribazole 5'-phosphate + adenosylcob(III)inamide-GDP = adenosylcob(III)alamin 5'-phosphate + GMP + H(+). The protein operates within cofactor biosynthesis; adenosylcobalamin biosynthesis; adenosylcobalamin from cob(II)yrinate a,c-diamide: step 7/7. Its function is as follows. Joins adenosylcobinamide-GDP and alpha-ribazole to generate adenosylcobalamin (Ado-cobalamin). Also synthesizes adenosylcobalamin 5'-phosphate from adenosylcobinamide-GDP and alpha-ribazole 5'-phosphate. This chain is Adenosylcobinamide-GDP ribazoletransferase, found in Geobacillus kaustophilus (strain HTA426).